Consider the following 299-residue polypeptide: Small ribosomal subunit protein uS2 (299 aa).

The segment covering 259–291 (AAASAAGPTSWEADGADWAASSAPAAAGESWAE) has biased composition (low complexity). The disordered stretch occupies residues 259 to 299 (AAASAAGPTSWEADGADWAASSAPAAAGESWAETQPAEGKW).

The protein belongs to the universal ribosomal protein uS2 family. In terms of assembly, component of the small ribosomal subunit. Mature ribosomes consist of a small (40S) and a large (60S) subunit. The 40S subunit contains about 33 different proteins and 1 molecule of RNA (18S). The 60S subunit contains about 49 different proteins and 3 molecules of RNA (25S, 5.8S and 5S). Interacts with rps21.

It localises to the cytoplasm. Required for the assembly and/or stability of the 40S ribosomal subunit. Required for the processing of the 20S rRNA-precursor to mature 18S rRNA in a late step of the maturation of 40S ribosomal subunits. This is Small ribosomal subunit protein uS2 (rps0) from Aspergillus flavus (strain ATCC 200026 / FGSC A1120 / IAM 13836 / NRRL 3357 / JCM 12722 / SRRC 167).